A 362-amino-acid chain; its full sequence is Phospho-N-acetylmuramoyl-pentapeptide-transferase (362 aa).

The next 10 helical transmembrane spans lie at 27–47 (VMAAMTALLISFACGPAVIRW), 73–93 (TMGGALIIIAIAVTTLLWGDL), 97–117 (YVWVTLLVTLGFGAVGWVDDW), 132–152 (WKYLWTSLIALAAALFLGLTA), 160–180 (LIVPFFKAVSYPLGMLGFVAL), 200–220 (GLAIMPTVMVAGALAIFAYVA), 237–257 (AGELAVFCGALAGAGLGFLWF), 264–284 (VFMGDVGALALGAALGTVAVV), 289–309 (IVLFIMGGLFVAETLSVMVQV), and 339–359 (QVVVRFWIITIMLVLFGLSTL).

The protein belongs to the glycosyltransferase 4 family. MraY subfamily. Mg(2+) serves as cofactor.

Its subcellular location is the cell inner membrane. The catalysed reaction is UDP-N-acetyl-alpha-D-muramoyl-L-alanyl-gamma-D-glutamyl-meso-2,6-diaminopimeloyl-D-alanyl-D-alanine + di-trans,octa-cis-undecaprenyl phosphate = di-trans,octa-cis-undecaprenyl diphospho-N-acetyl-alpha-D-muramoyl-L-alanyl-D-glutamyl-meso-2,6-diaminopimeloyl-D-alanyl-D-alanine + UMP. It functions in the pathway cell wall biogenesis; peptidoglycan biosynthesis. Catalyzes the initial step of the lipid cycle reactions in the biosynthesis of the cell wall peptidoglycan: transfers peptidoglycan precursor phospho-MurNAc-pentapeptide from UDP-MurNAc-pentapeptide onto the lipid carrier undecaprenyl phosphate, yielding undecaprenyl-pyrophosphoryl-MurNAc-pentapeptide, known as lipid I. The chain is Phospho-N-acetylmuramoyl-pentapeptide-transferase from Aromatoleum aromaticum (strain DSM 19018 / LMG 30748 / EbN1) (Azoarcus sp. (strain EbN1)).